A 763-amino-acid polypeptide reads, in one-letter code: Forkhead box protein M1 (763 aa).

A disordered region spans residues 1-53 (MKTSPRRPLILKRRRLPLPVQNAPSETSEEEPKRSPAQQESNQAEASKEVAES). Polar residues predominate over residues 36–45 (PAQQESNQAE). Residues Lys-163, Lys-201, and Lys-325 each participate in a glycyl lysine isopeptide (Lys-Gly) (interchain with G-Cter in SUMO2) cross-link. Residues 198–232 (RSIKQEMEEKENCHLEQRQVKVEEPSRPSASWQNS) form a disordered region. Positions 200–223 (IKQEMEEKENCHLEQRQVKVEEPS) are enriched in basic and acidic residues. Positions 235 to 327 (ERPPYSYMAM…LTLDQVFKPL (93 aa)) form a DNA-binding region, fork-head. A disordered region spans residues 329 to 351 (PGSPQLPEHLESQQKRPNPELRR). Ser-331 carries the post-translational modification Phosphoserine. Residues 336–351 (EHLESQQKRPNPELRR) show a composition bias toward basic and acidic residues. A Glycyl lysine isopeptide (Lys-Gly) (interchain with G-Cter in SUMO2) cross-link involves residue Lys-356. Position 376 is a phosphoserine; by CHEK2 (Ser-376). Residues Lys-422 and Lys-440 each participate in a glycyl lysine isopeptide (Lys-Gly) (interchain with G-Cter in SUMO2) cross-link. The disordered stretch occupies residues 482–711 (PPLEEWPSPA…PGSPEPQVSG (230 aa)). Ser-489 is modified (phosphoserine; by GSK3). Over residues 494–503 (FKEESSHSWE) the composition is skewed to basic and acidic residues. At Ser-522 the chain carries Phosphoserine. Residues 583 to 592 (DPASQLSYSQ) are compositionally biased toward polar residues. Phosphothreonine; by CDK1 is present on Thr-611. A phosphothreonine mark is found at Thr-620, Thr-627, and Thr-662. A Phosphoserine; by CDK1 modification is found at Ser-693. 2 positions are modified to phosphoserine; by PLK1: Ser-730 and Ser-739.

Interacts with PINT87aa which is encoded by the circular form of the long non-coding RNA LINC-PINT; the interaction inhibits FOXM1-mediated transcription of PHB2. In terms of processing, phosphorylated in M (mitotic) phase. Phosphorylation by the checkpoint kinase CHEK2 in response to DNA damage increases the FOXM1 protein stability probably stimulating the transcription of genes involved in DNA repair. Phosphorylated by CDK1 in late S and G2 phases, creating docking sites for the POLO box domains of PLK1. Subsequently, PLK1 binds and phosphorylates FOXM1, leading to activation of transcriptional activity and subsequent enhanced expression of key mitotic regulators. Phosphorylated by GSK3B leading to ubiquitination and proteasomal degradation. Ubiquitinated in a FBXW7-dependent manner leading to proteasomal degradation. As to expression, expressed in thymus, testis, small intestine, colon followed by ovary. Appears to be expressed only in adult organs containing proliferating/cycling cells or in response to growth factors. Also expressed in epithelial cell lines derived from tumors. Not expressed in resting cells. Isoform 2 is highly expressed in testis.

It localises to the nucleus. Functionally, transcription factor regulating the expression of cell cycle genes essential for DNA replication and mitosis. Plays a role in the control of cell proliferation. Also plays a role in DNA break repair, participating in the DNA damage checkpoint response. Promotes transcription of PHB2. This is Forkhead box protein M1 (FOXM1) from Homo sapiens (Human).